An 80-amino-acid chain; its full sequence is uncharacterized protein (80 aa).

2 helical membrane passes run 15-35 (ALGL…LSGV) and 45-65 (WFEM…WAMV).

This sequence to H.influenzae HI_0974B.

The protein resides in the cell membrane. This is an uncharacterized protein from Escherichia coli (strain K12).